Reading from the N-terminus, the 429-residue chain is 5-methylthioadenosine/S-adenosylhomocysteine deaminase (429 aa).

Zn(2+) is bound by residues His-66 and His-68. Glu-95, Arg-147, Arg-158, and His-181 together coordinate substrate. His-208 provides a ligand contact to Zn(2+). Substrate contacts are provided by Glu-211 and Asp-296. A Zn(2+)-binding site is contributed by Asp-296.

It belongs to the metallo-dependent hydrolases superfamily. MTA/SAH deaminase family. The cofactor is Zn(2+).

It carries out the reaction S-adenosyl-L-homocysteine + H2O + H(+) = S-inosyl-L-homocysteine + NH4(+). The enzyme catalyses S-methyl-5'-thioadenosine + H2O + H(+) = S-methyl-5'-thioinosine + NH4(+). Its function is as follows. Catalyzes the deamination of 5-methylthioadenosine and S-adenosyl-L-homocysteine into 5-methylthioinosine and S-inosyl-L-homocysteine, respectively. Is also able to deaminate adenosine. This Caldicellulosiruptor saccharolyticus (strain ATCC 43494 / DSM 8903 / Tp8T 6331) protein is 5-methylthioadenosine/S-adenosylhomocysteine deaminase.